Here is a 143-residue protein sequence, read N- to C-terminus: Large-conductance mechanosensitive channel (143 aa).

3 helical membrane-spanning segments follow: residues 10 to 30 (FAIK…GAFG), 40 to 60 (IIMP…QKFI), and 86 to 106 (GNFL…FLMV).

This sequence belongs to the MscL family. Homopentamer.

Its subcellular location is the cell inner membrane. Its function is as follows. Channel that opens in response to stretch forces in the membrane lipid bilayer. May participate in the regulation of osmotic pressure changes within the cell. This chain is Large-conductance mechanosensitive channel, found in Acinetobacter baumannii (strain ATCC 17978 / DSM 105126 / CIP 53.77 / LMG 1025 / NCDC KC755 / 5377).